The chain runs to 189 residues: UPF0301 protein CF0373 (189 aa).

The protein belongs to the UPF0301 (AlgH) family.

This is UPF0301 protein CF0373 from Chlamydia felis (strain Fe/C-56) (Chlamydophila felis).